A 239-amino-acid polypeptide reads, in one-letter code: MTAPLSLFVTGTDTEIGKTFVSAAMLHGFARHGLRAAALKPVAAGAYQRDGVWRNEDADQLDAAANVVLPPELRTPFLLKAPAAPHIVAAQEGVTLDLDTIVACHREALTRADVVVVEGVGGFRVPLNDTQDTADLAVALGLPVVLVVGIRLGCISHALLTADAIRQRGLALAGWVANHVDPAMSFADENVATIRDWLAREHRAPLVGRIAHMTPAAPESAAAMLDIAALVESLRAARP.

15 to 20 (EIGKTF) is a binding site for ATP. T19 is a binding site for Mg(2+). K40 is a catalytic residue. Residues D57, 118–121 (EGVG), and 178–179 (NH) each bind ATP. D57 and E118 together coordinate Mg(2+).

Belongs to the dethiobiotin synthetase family. In terms of assembly, homodimer. Mg(2+) serves as cofactor.

The protein localises to the cytoplasm. It carries out the reaction (7R,8S)-7,8-diammoniononanoate + CO2 + ATP = (4R,5S)-dethiobiotin + ADP + phosphate + 3 H(+). It participates in cofactor biosynthesis; biotin biosynthesis; biotin from 7,8-diaminononanoate: step 1/2. Catalyzes a mechanistically unusual reaction, the ATP-dependent insertion of CO2 between the N7 and N8 nitrogen atoms of 7,8-diaminopelargonic acid (DAPA, also called 7,8-diammoniononanoate) to form a ureido ring. This is ATP-dependent dethiobiotin synthetase BioD from Burkholderia cenocepacia (strain ATCC BAA-245 / DSM 16553 / LMG 16656 / NCTC 13227 / J2315 / CF5610) (Burkholderia cepacia (strain J2315)).